A 205-amino-acid polypeptide reads, in one-letter code: Proteasome subunit beta type-3 (205 aa).

The protein belongs to the peptidase T1B family. The 26S proteasome consists of a 20S proteasome core and two 19S regulatory subunits. The 20S proteasome core is composed of 28 subunits that are arranged in four stacked rings, resulting in a barrel-shaped structure. The two end rings are each formed by seven alpha subunits, and the two central rings are each formed by seven beta subunits. The catalytic chamber with the active sites is on the inside of the barrel.

Its subcellular location is the cytoplasm. It localises to the nucleus. Functionally, non-catalytic component of the proteasome, a multicatalytic proteinase complex which is characterized by its ability to cleave peptides with Arg, Phe, Tyr, Leu, and Glu adjacent to the leaving group at neutral or slightly basic pH. The proteasome has an ATP-dependent proteolytic activity. The polypeptide is Proteasome subunit beta type-3 (psmb3) (Oncorhynchus mykiss (Rainbow trout)).